The chain runs to 616 residues: Probable Xaa-Pro aminopeptidase P (616 aa).

Mn(2+) contacts are provided by Asp-413, Asp-424, Glu-522, and Glu-536.

This sequence belongs to the peptidase M24B family. The cofactor is Mn(2+).

The enzyme catalyses Release of any N-terminal amino acid, including proline, that is linked to proline, even from a dipeptide or tripeptide.. In terms of biological role, catalyzes the removal of a penultimate prolyl residue from the N-termini of peptides. The chain is Probable Xaa-Pro aminopeptidase P (AMPP) from Paracoccidioides brasiliensis (strain Pb03).